The following is a 663-amino-acid chain: Protein LNK2 (663 aa).

Disordered regions lie at residues histidine 528–arginine 549 and methionine 590–leucine 663. Residues glycine 602–glycine 629 show a composition bias toward basic and acidic residues. A compositionally biased stretch (polar residues) spans alanine 639–valine 648.

In terms of assembly, interacts with CCA1, LHY, REV4 and REV8, but not with PRR7 or PRR9. In terms of tissue distribution, expressed in roots, stems, leaves, seedlings, cotyledons, inflorescences and siliques. Highest expression in root tips, young leaves and vasculatur tissues.

It localises to the nucleus. Functionally, transcriptional coactivator necessary for expression of the clock genes PRR5 and TOC1. Antagonizes REV8 function in the regulation of anthocyanin accumulation. Involved in red light input to the clock. Activates clock-controlled genes with afternoon peak. Mediates light inhibition of hypocotyl elongation. Unable to bind to DNA, but recruited to the evening element (EE)-containing region of the PRR5 and TOC1 promoters through its interaction with the DNA binding proteins REV8 and REV4. This is Protein LNK2 from Arabidopsis thaliana (Mouse-ear cress).